The following is a 129-amino-acid chain: Histone H2B.1 (129 aa).

The segment covering 1–19 (MAPKAEKKPASKAPAEKKP) has biased composition (basic and acidic residues). The disordered stretch occupies residues 1-37 (MAPKAEKKPASKAPAEKKPAAKKTASTDSKKRTKTRK). An N6-acetyllysine; alternate mark is found at Lys-7 and Lys-8. Glycyl lysine isopeptide (Lys-Gly) (interchain with G-Cter in SUMO); alternate cross-links involve residues Lys-7 and Lys-8. At Ser-11 the chain carries Phosphoserine. Lys-12 carries the post-translational modification N6-acetyllysine. N6-acetyllysine; alternate is present on Lys-17. Lys-17 is covalently cross-linked (Glycyl lysine isopeptide (Lys-Gly) (interchain with G-Cter in SUMO); alternate). A Glycyl lysine isopeptide (Lys-Gly) (interchain with G-Cter in SUMO) cross-link involves residue Lys-18. Lys-123 participates in a covalent cross-link: Glycyl lysine isopeptide (Lys-Gly) (interchain with G-Cter in ubiquitin).

This sequence belongs to the histone H2B family. As to quaternary structure, the nucleosome is a histone octamer containing two molecules each of H2A, H2B, H3 and H4 assembled in one H3-H4 heterotetramer and two H2A-H2B heterodimers. The octamer wraps approximately 147 bp of DNA. Monoubiquitinated by the UBC2-BRE1 complex to form H2BK123ub1. H2BK123ub1 gives a specific tag for epigenetic transcriptional activation and is also prerequisite for H3K4me and H3K79me formation. H2BK123ub1 also modulates the formation of double-strand breaks during meiosis and is a prerequisite for DNA-damage checkpoint activation. Post-translationally, phosphorylated by STE20 to form H2BS10ph during progression through meiotic prophase. May be correlated with chromosome condensation. In terms of processing, acetylated by GCN5 to form H2BK11ac and H2BK16ac. H2BK16ac can also be formed by ESA1. Acetylation of N-terminal lysines and particularly formation of H2BK11acK16ac has a positive effect on transcription. Sumoylation to form H2BK6su or H2BK7su, and probably also H2BK16su or H2BK17su, occurs preferentially near the telomeres and represses gene transcription.

It localises to the nucleus. Its subcellular location is the chromosome. Functionally, core component of nucleosome. Nucleosomes wrap and compact DNA into chromatin, limiting DNA accessibility to the cellular machineries which require DNA as a template. Histones thereby play a central role in transcription regulation, DNA repair, DNA replication and chromosomal stability. DNA accessibility is regulated via a complex set of post-translational modifications of histones, also called histone code, and nucleosome remodeling. The protein is Histone H2B.1 (HTB1) of Meyerozyma guilliermondii (strain ATCC 6260 / CBS 566 / DSM 6381 / JCM 1539 / NBRC 10279 / NRRL Y-324) (Yeast).